The following is a 173-amino-acid chain: Small ribosomal subunit protein uS5 (173 aa).

The 64-residue stretch at 17-80 folds into the S5 DRBM domain; that stretch reads WQERVIQIRR…ADGKKQLIEV (64 aa).

The protein belongs to the universal ribosomal protein uS5 family. As to quaternary structure, part of the 30S ribosomal subunit. Contacts proteins S4 and S8.

With S4 and S12 plays an important role in translational accuracy. Functionally, located at the back of the 30S subunit body where it stabilizes the conformation of the head with respect to the body. This Gloeothece citriformis (strain PCC 7424) (Cyanothece sp. (strain PCC 7424)) protein is Small ribosomal subunit protein uS5.